A 747-amino-acid polypeptide reads, in one-letter code: Histone-lysine N-methyltransferase EZH1 (747 aa).

A disordered region spans residues 188-231 (DEEEEGHNDTSDGKQDDSKEDLPVTRKRKRHAIEGNKKSSKKQF). Residues 194–211 (HNDTSDGKQDDSKEDLPV) are compositionally biased toward basic and acidic residues. Residue lysine 327 forms a Glycyl lysine isopeptide (Lys-Gly) (interchain with G-Cter in SUMO2) linkage. The segment at 378-421 (SAVAETKEGDSDRDTGNDWASSSSEANSRCQTPTKQKASPAPPQ) is disordered. Residues 382 to 393 (ETKEGDSDRDTG) show a composition bias toward basic and acidic residues. A compositionally biased stretch (polar residues) spans 395-414 (DWASSSSEANSRCQTPTKQK). Residues 491 to 496 (QKKKRK) carry the Nuclear localization signal motif. Residues 504-606 (CRKIQLKKDN…CKVVSCKNCS (103 aa)) form the CXC domain. Positions 613–728 (KHLLLAPSDV…AGEELFLDYR (116 aa)) constitute an SET domain.

Belongs to the class V-like SAM-binding methyltransferase superfamily. Histone-lysine methyltransferase family. EZ subfamily. In terms of assembly, component of the PRC2/EED-EZH1 complex, which includes EED, EZH1, SUZ12, RBBP4 and AEBP2. The PRC2/EED-EZH1 is less abundant than the PRC2/EED-EZH2 complex, has weak methyltransferase activity and compacts chromatin in the absence of the methyltransferase cofactor S-adenosyl-L-methionine (SAM). Interacts with EZHIP; the interaction blocks EZH1 methyltransferase activity.

The protein resides in the nucleus. The enzyme catalyses L-lysyl(27)-[histone H3] + 3 S-adenosyl-L-methionine = N(6),N(6),N(6)-trimethyl-L-lysyl(27)-[histone H3] + 3 S-adenosyl-L-homocysteine + 3 H(+). Functionally, polycomb group (PcG) protein. Catalytic subunit of the PRC2/EED-EZH1 complex, which methylates 'Lys-27' of histone H3, leading to transcriptional repression of the affected target gene. Able to mono-, di- and trimethylate 'Lys-27' of histone H3 to form H3K27me1, H3K27me2 and H3K27me3, respectively. Required for embryonic stem cell derivation and self-renewal, suggesting that it is involved in safeguarding embryonic stem cell identity. Compared to EZH2-containing complexes, it is less abundant in embryonic stem cells, has weak methyltransferase activity and plays a less critical role in forming H3K27me3, which is required for embryonic stem cell identity and proper differentiation. This chain is Histone-lysine N-methyltransferase EZH1 (EZH1), found in Pongo abelii (Sumatran orangutan).